Reading from the N-terminus, the 167-residue chain is Small ribosomal subunit protein uS5 (167 aa).

One can recognise an S5 DRBM domain in the interval 12–75; the sequence is LQEKLVAVNR…EKARRNIVSV (64 aa).

Belongs to the universal ribosomal protein uS5 family. In terms of assembly, part of the 30S ribosomal subunit. Contacts proteins S4 and S8.

With S4 and S12 plays an important role in translational accuracy. Its function is as follows. Located at the back of the 30S subunit body where it stabilizes the conformation of the head with respect to the body. In Shewanella loihica (strain ATCC BAA-1088 / PV-4), this protein is Small ribosomal subunit protein uS5.